The primary structure comprises 599 residues: Elongation factor 4 (599 aa).

Residues 4-186 (EHIRNFSIIA…EIVKKIPPPK (183 aa)) form the tr-type G domain. Residues 16–21 (DHGKST) and 133–136 (NKID) each bind GTP.

This sequence belongs to the TRAFAC class translation factor GTPase superfamily. Classic translation factor GTPase family. LepA subfamily.

It is found in the cell inner membrane. It catalyses the reaction GTP + H2O = GDP + phosphate + H(+). Functionally, required for accurate and efficient protein synthesis under certain stress conditions. May act as a fidelity factor of the translation reaction, by catalyzing a one-codon backward translocation of tRNAs on improperly translocated ribosomes. Back-translocation proceeds from a post-translocation (POST) complex to a pre-translocation (PRE) complex, thus giving elongation factor G a second chance to translocate the tRNAs correctly. Binds to ribosomes in a GTP-dependent manner. The sequence is that of Elongation factor 4 from Citrifermentans bemidjiense (strain ATCC BAA-1014 / DSM 16622 / JCM 12645 / Bem) (Geobacter bemidjiensis).